The following is a 596-amino-acid chain: Pentatricopeptide repeat-containing protein At1g50270 (596 aa).

PPR repeat units follow at residues 66-102, 103-136, 137-167, 168-202, 203-237, 239-269, 270-304, 305-339, 340-370, 371-405, 406-436, and 442-472; these read SIQL…GVIP, SRHT…GLDS, DPFV…AEDK, DVVT…GVAA, NEMT…GRVK, DVFI…MPSR, NVVT…DVAP, NEKT…SIEI, NTTA…LHEK, NVYT…HVSP, NEVT…MKGR, and KADH…MPME. Residues 477-552 form a type E motif region; it reads VWGALFGSCL…SPGFSWIEVK (76 aa). The type E(+) motif stretch occupies residues 553–584; that stretch reads GKLCEFIAFDDKKPLESDDLYKTLDTVGVQMR.

The protein belongs to the PPR family. PCMP-E subfamily.

In Arabidopsis thaliana (Mouse-ear cress), this protein is Pentatricopeptide repeat-containing protein At1g50270 (PCMP-E42).